Here is a 266-residue protein sequence, read N- to C-terminus: Hydroxyethylthiazole kinase (266 aa).

Residue Met-43 coordinates substrate. Arg-119 and Thr-166 together coordinate ATP. Gly-193 contributes to the substrate binding site.

The protein belongs to the Thz kinase family. Mg(2+) is required as a cofactor.

The catalysed reaction is 5-(2-hydroxyethyl)-4-methylthiazole + ATP = 4-methyl-5-(2-phosphooxyethyl)-thiazole + ADP + H(+). The protein operates within cofactor biosynthesis; thiamine diphosphate biosynthesis; 4-methyl-5-(2-phosphoethyl)-thiazole from 5-(2-hydroxyethyl)-4-methylthiazole: step 1/1. Functionally, catalyzes the phosphorylation of the hydroxyl group of 4-methyl-5-beta-hydroxyethylthiazole (THZ). The chain is Hydroxyethylthiazole kinase from Methanococcus maripaludis (strain C7 / ATCC BAA-1331).